Consider the following 337-residue polypeptide: Lipopolysaccharide 1,3-galactosyltransferase (337 aa).

Residues 33–38 (GIDKNF) and 130–131 (DA) contribute to the UDP site. Mg(2+)-binding residues include D130 and D132. 2 consecutive short sequence motifs (DXD) follow at residues 130 to 132 (DAD) and 219 to 221 (DQD). Residue H264 participates in Mg(2+) binding. 264–270 (HYIGPTK) provides a ligand contact to UDP.

Belongs to the glycosyltransferase 8 family. It depends on Mg(2+) as a cofactor.

It carries out the reaction UDP-alpha-D-galactose + [lipopolysaccharide] = UDP + 3-alpha-D-galactosyl-[lipopolysaccharide].. It participates in bacterial outer membrane biogenesis; LPS core biosynthesis. Its activity is regulated as follows. Inhibited in a competitive manner by closely related nonsubstrate lipopolysaccharides. Its function is as follows. Galactosyltransferase involved in the biosynthesis of the core oligosaccharide region of lipopolysaccharide (LPS). Catalyzes the addition of an alpha l,3-linked galactose (galactose I) to the first outer-core glucose (glucose I). Cannot use UDP-glucose. Activity probably does not require the branched galactose added by WaaB, but it is higher in the presence of this branched galactose. The protein is Lipopolysaccharide 1,3-galactosyltransferase of Salmonella typhimurium (strain LT2 / SGSC1412 / ATCC 700720).